A 67-amino-acid chain; its full sequence is Large ribosomal subunit protein bL35 (67 aa).

Over residues 1–16 (MPKMKTKSSAKKRFRV) the composition is skewed to basic residues. Residues 1–24 (MPKMKTKSSAKKRFRVRPGGTVKR) are disordered.

Belongs to the bacterial ribosomal protein bL35 family.

The chain is Large ribosomal subunit protein bL35 from Delftia acidovorans (strain DSM 14801 / SPH-1).